A 250-amino-acid polypeptide reads, in one-letter code: Ubiquinone/menaquinone biosynthesis C-methyltransferase UbiE (250 aa).

Residues threonine 74, aspartate 94, 122–123 (DA), and serine 139 each bind S-adenosyl-L-methionine.

This sequence belongs to the class I-like SAM-binding methyltransferase superfamily. MenG/UbiE family.

The enzyme catalyses a 2-demethylmenaquinol + S-adenosyl-L-methionine = a menaquinol + S-adenosyl-L-homocysteine + H(+). The catalysed reaction is a 2-methoxy-6-(all-trans-polyprenyl)benzene-1,4-diol + S-adenosyl-L-methionine = a 5-methoxy-2-methyl-3-(all-trans-polyprenyl)benzene-1,4-diol + S-adenosyl-L-homocysteine + H(+). It functions in the pathway quinol/quinone metabolism; menaquinone biosynthesis; menaquinol from 1,4-dihydroxy-2-naphthoate: step 2/2. The protein operates within cofactor biosynthesis; ubiquinone biosynthesis. Methyltransferase required for the conversion of demethylmenaquinol (DMKH2) to menaquinol (MKH2) and the conversion of 2-polyprenyl-6-methoxy-1,4-benzoquinol (DDMQH2) to 2-polyprenyl-3-methyl-6-methoxy-1,4-benzoquinol (DMQH2). The protein is Ubiquinone/menaquinone biosynthesis C-methyltransferase UbiE of Paracoccus denitrificans (strain Pd 1222).